Here is a 202-residue protein sequence, read N- to C-terminus: Holliday junction resolvase RecU (202 aa).

The Mg(2+) site is built by Thr85, Asp87, Glu100, and Gln119.

It belongs to the RecU family. Mg(2+) serves as cofactor.

The protein localises to the cytoplasm. The catalysed reaction is Endonucleolytic cleavage at a junction such as a reciprocal single-stranded crossover between two homologous DNA duplexes (Holliday junction).. Endonuclease that resolves Holliday junction intermediates in genetic recombination. Cleaves mobile four-strand junctions by introducing symmetrical nicks in paired strands. Promotes annealing of linear ssDNA with homologous dsDNA. Required for DNA repair, homologous recombination and chromosome segregation. The sequence is that of Holliday junction resolvase RecU from Streptococcus uberis (strain ATCC BAA-854 / 0140J).